A 51-amino-acid chain; its full sequence is Insulin (51 aa).

3 disulfide bridges follow: C8-C37, C20-C50, and C36-C41.

The protein belongs to the insulin family. As to quaternary structure, heterodimer of a B chain and an A chain linked by two disulfide bonds.

It is found in the secreted. Insulin decreases blood glucose concentration. It increases cell permeability to monosaccharides, amino acids and fatty acids. It accelerates glycolysis, the pentose phosphate cycle, and glycogen synthesis in liver. This is Insulin (ins) from Platichthys flesus (European flounder).